The primary structure comprises 74 residues: Conotoxin MiK41 (74 aa).

Residues 1-22 (MKLTCVLIITVLFLTACQLTTA) form the signal peptide. The propeptide occupies 23-45 (VTYSRGEHKHRALMSTGTNYRLP). Intrachain disulfides connect C48-C62, C55-C66, and C61-C73.

This sequence belongs to the conotoxin O1 superfamily. Expressed by the venom duct.

It is found in the secreted. In Conus miles (Soldier cone), this protein is Conotoxin MiK41.